The chain runs to 512 residues: Maturase K (512 aa).

Belongs to the intron maturase 2 family. MatK subfamily.

The protein resides in the plastid. It is found in the chloroplast. Usually encoded in the trnK tRNA gene intron. Probably assists in splicing its own and other chloroplast group II introns. The chain is Maturase K from Acer campestre (Field maple).